The sequence spans 240 residues: UPF0173 metal-dependent hydrolase OE_2513F (240 aa).

Belongs to the UPF0173 family.

The sequence is that of UPF0173 metal-dependent hydrolase OE_2513F from Halobacterium salinarum (strain ATCC 29341 / DSM 671 / R1).